The primary structure comprises 466 residues: 3-isopropylmalate dehydratase large subunit (466 aa).

Residues Cys347, Cys407, and Cys410 each coordinate [4Fe-4S] cluster.

Belongs to the aconitase/IPM isomerase family. LeuC type 1 subfamily. In terms of assembly, heterodimer of LeuC and LeuD. The cofactor is [4Fe-4S] cluster.

It carries out the reaction (2R,3S)-3-isopropylmalate = (2S)-2-isopropylmalate. The protein operates within amino-acid biosynthesis; L-leucine biosynthesis; L-leucine from 3-methyl-2-oxobutanoate: step 2/4. Catalyzes the isomerization between 2-isopropylmalate and 3-isopropylmalate, via the formation of 2-isopropylmaleate. This Shigella boydii serotype 4 (strain Sb227) protein is 3-isopropylmalate dehydratase large subunit.